The following is a 346-amino-acid chain: Anthranilate phosphoribosyltransferase (346 aa).

Residues Gly-81, 84–85, 91–94, 109–117, and Ser-121 each bind 5-phospho-alpha-D-ribose 1-diphosphate; these read GD, NVST, and KHGNRSVSS. Residue Gly-81 coordinates anthranilate. Position 93 (Ser-93) interacts with Mg(2+). Residue Asn-112 coordinates anthranilate. Position 167 (Arg-167) interacts with anthranilate. The Mg(2+) site is built by Asp-226 and Glu-227.

This sequence belongs to the anthranilate phosphoribosyltransferase family. As to quaternary structure, homodimer. It depends on Mg(2+) as a cofactor.

It catalyses the reaction N-(5-phospho-beta-D-ribosyl)anthranilate + diphosphate = 5-phospho-alpha-D-ribose 1-diphosphate + anthranilate. The protein operates within amino-acid biosynthesis; L-tryptophan biosynthesis; L-tryptophan from chorismate: step 2/5. Its function is as follows. Catalyzes the transfer of the phosphoribosyl group of 5-phosphorylribose-1-pyrophosphate (PRPP) to anthranilate to yield N-(5'-phosphoribosyl)-anthranilate (PRA). This chain is Anthranilate phosphoribosyltransferase, found in Hahella chejuensis (strain KCTC 2396).